The primary structure comprises 387 residues: Eukaryotic translation initiation factor 3 subunit M (387 aa).

A PCI domain is found at 181-340; that stretch reads LSSKVMIELL…RKVHISSTMH (160 aa).

The protein belongs to the eIF-3 subunit M family. Component of the eukaryotic translation initiation factor 3 (eIF-3) complex. The eIF-3 complex interacts with pix.

It localises to the cytoplasm. Its subcellular location is the golgi apparatus. In terms of biological role, component of the eukaryotic translation initiation factor 3 (eIF-3) complex, which is involved in protein synthesis of a specialized repertoire of mRNAs and, together with other initiation factors, stimulates binding of mRNA and methionyl-tRNAi to the 40S ribosome. The eIF-3 complex specifically targets and initiates translation of a subset of mRNAs involved in cell proliferation. This chain is Eukaryotic translation initiation factor 3 subunit M, found in Drosophila persimilis (Fruit fly).